An 828-amino-acid chain; its full sequence is Glycerol-3-phosphate acyltransferase (828 aa).

Residues 309 to 314 carry the HXXXXD motif motif; sequence CHRSHI.

Belongs to the GPAT/DAPAT family.

It is found in the cell inner membrane. It carries out the reaction sn-glycerol 3-phosphate + an acyl-CoA = a 1-acyl-sn-glycero-3-phosphate + CoA. It participates in phospholipid metabolism; CDP-diacylglycerol biosynthesis; CDP-diacylglycerol from sn-glycerol 3-phosphate: step 1/3. The chain is Glycerol-3-phosphate acyltransferase from Pseudomonas putida (strain GB-1).